The primary structure comprises 84 residues: Cell division topological specificity factor (84 aa).

Belongs to the MinE family.

Its function is as follows. Prevents the cell division inhibition by proteins MinC and MinD at internal division sites while permitting inhibition at polar sites. This ensures cell division at the proper site by restricting the formation of a division septum at the midpoint of the long axis of the cell. This chain is Cell division topological specificity factor, found in Cupriavidus necator (strain ATCC 17699 / DSM 428 / KCTC 22496 / NCIMB 10442 / H16 / Stanier 337) (Ralstonia eutropha).